Reading from the N-terminus, the 389-residue chain is ATP phosphoribosyltransferase regulatory subunit (389 aa).

This sequence belongs to the class-II aminoacyl-tRNA synthetase family. HisZ subfamily. Heteromultimer composed of HisG and HisZ subunits.

The protein resides in the cytoplasm. The protein operates within amino-acid biosynthesis; L-histidine biosynthesis; L-histidine from 5-phospho-alpha-D-ribose 1-diphosphate: step 1/9. Functionally, required for the first step of histidine biosynthesis. May allow the feedback regulation of ATP phosphoribosyltransferase activity by histidine. The protein is ATP phosphoribosyltransferase regulatory subunit of Hydrogenovibrio crunogenus (strain DSM 25203 / XCL-2) (Thiomicrospira crunogena).